The primary structure comprises 755 residues: Transcription factor kayak, isoforms A/B/F (755 aa).

Composition is skewed to low complexity over residues 23–66 (FAQQ…LPTQ) and 149–159 (QQHYPSESQSS). 4 disordered regions span residues 23–75 (FAQQ…SQSV), 149–168 (QQHY…PETP), 316–350 (LGQG…HTDS), and 383–440 (GSAS…KRRV). Residues 316 to 333 (LGQGSESEDSNASYNDTQ) show a composition bias toward polar residues. 2 stretches are compositionally biased toward low complexity: residues 341–350 (TDTSSAHTDS) and 383–397 (GSAS…TSNT). The bZIP domain occupies 418–481 (EQKRAVRRER…NQLEYLLATH (64 aa)). The tract at residues 420-439 (KRAVRRERNKQAAARCRKRR) is basic motif. The tract at residues 446-453 (LTEEVEQL) is leucine-zipper. Positions 510–531 (AGSSGSGASSHHNHNSNDSSNG) are enriched in low complexity. Disordered stretches follow at residues 510–552 (AGSS…PLDL) and 716–755 (DGGT…LVSL). A compositionally biased stretch (polar residues) spans 539-549 (TLNSTGRSNSP). At Ser-548 the chain carries Phosphoserine.

Belongs to the bZIP family. Fos subfamily. As to quaternary structure, homodimer. Heterodimer with Jra. The kay-Jra heterodimer binds more stably to the AP-1 site than either of the two proteins alone. As to expression, early expression in the embryo is mesodermal and some of this expression is localized to a region surrounding the cephalic furrow. Later in embryonic development expression is ectodermal, corresponding to muscle attachment sites. Also observed in part of the mid- and hindgut and in the anal pad.

The protein resides in the nucleus. Its function is as follows. Developmentally regulated transcription factor AP-1 binds and recognizes the enhancer DNA sequence: 5'-TGA[CG]TCA-3'. May play a role in the function or determination of a particular subset of cells in the developing embryo. It is able to carry out its function either independently of or in conjunction with Jra. This is Transcription factor kayak, isoforms A/B/F (kay) from Drosophila melanogaster (Fruit fly).